Here is an 827-residue protein sequence, read N- to C-terminus: Thymine dioxygenase JBP1 (827 aa).

The segment at 62–264 is thymine dioxygenase; it reads QIIGVVLREA…RLTCVFYYRA (203 aa). His189, Asp191, and His239 together coordinate Fe cation. Arg255 lines the 2-oxoglutarate pocket. 2 disordered regions span residues 364–383 and 539–568; these read PLRG…PRPL and PEEK…HEKR. The segment at 392–561 is DNA-binding JBP1 domain; the sequence is TNLMVSTAVE…IEEARRHGMP (170 aa). A compositionally biased stretch (basic and acidic residues) spans 539–557; it reads PEEKKRRMERKQRIEEARR.

Belongs to the TET family. JBP1 subfamily. In terms of assembly, monomer. Binds to DNA as a monomer. Requires Fe(2+) as cofactor.

It localises to the nucleus. The catalysed reaction is thymine + 2-oxoglutarate + O2 = 5-hydroxymethyluracil + succinate + CO2. Dioxygenase that catalyzes the first step of DNA base J (beta-d-glucosyl-HOMedU) biosynthesis by converting thymine to 5-hydroxymethyluracil (HOMedU). DNA base J is a hypermodified thymidine residue found in the genome of kinetoplastid parasites, which is localized primarily to repetitive DNA, namely the telomeres, and is implicated in the regulation of antigenic variation. Also specifically binds to base J-containing DNA (J-DNA). Involved in propagation and maintenance of DNA base J synthesis initiated by JBP2 by specifically binding already synthesized DNA base J and propagating J synthesis. Thymine dioxygenase activity and J-DNA-binding are independent functions. The sequence is that of Thymine dioxygenase JBP1 (JBP1) from Leishmania tarentolae (Sauroleishmania tarentolae).